The chain runs to 360 residues: D-alanine--D-alanine ligase (360 aa).

One can recognise an ATP-grasp domain in the interval lysine 149 to glutamine 353. Lysine 176–glutamate 231 lines the ATP pocket. Mg(2+) is bound by residues aspartate 308, glutamate 320, and asparagine 322.

This sequence belongs to the D-alanine--D-alanine ligase family. Mg(2+) is required as a cofactor. The cofactor is Mn(2+).

Its subcellular location is the cytoplasm. It carries out the reaction 2 D-alanine + ATP = D-alanyl-D-alanine + ADP + phosphate + H(+). The protein operates within cell wall biogenesis; peptidoglycan biosynthesis. Its function is as follows. Cell wall formation. This is D-alanine--D-alanine ligase from Corynebacterium glutamicum (strain ATCC 13032 / DSM 20300 / JCM 1318 / BCRC 11384 / CCUG 27702 / LMG 3730 / NBRC 12168 / NCIMB 10025 / NRRL B-2784 / 534).